The chain runs to 1744 residues: Transcription initiation factor TFIID subunit 1 (1744 aa).

Disordered stretches follow at residues M1–E65, V248–S275, P429–P488, Q1001–N1024, T1071–G1098, and M1186–P1213. Positions A43–S52 are enriched in polar residues. A compositionally biased stretch (basic and acidic residues) spans V55–N64. Positions P429–D439 are enriched in basic and acidic residues. Over residues H440 to K449 the composition is skewed to basic residues. Residues E477–P488 show a composition bias toward polar residues. Positions S1012 to N1024 are enriched in acidic residues. Coiled coils occupy residues D1019–K1080, Y1161–K1204, and N1282–A1314. Composition is skewed to basic and acidic residues over residues E1076–S1093 and M1186–V1205. Over residues Y1319–I1344 the composition is skewed to gly residues. Residues Y1319–E1391 form a disordered region. Residues S1354–L1363 are compositionally biased toward polar residues. Residues G1372–G1381 are compositionally biased toward low complexity. The Nuclear localization signal signature appears at V1379–S1386. Bromo domains follow at residues R1404–R1512 and Y1537–Q1634. Positions D1666–I1694 are enriched in acidic residues. Disordered stretches follow at residues D1666–D1702 and N1714–F1744.

Belongs to the TAF1 family. Component of the TFIID basal transcription factor complex, composed of TATA-box-binding protein tbp-1, and a number of TBP-associated factors (TAFs).

It localises to the nucleus. In terms of biological role, the TFIID basal transcription factor complex plays a major role in the initiation of RNA polymerase II (Pol II)-dependent transcription. TFIID recognizes and binds promoters via its subunit tbp-1, a TATA-box-binding protein, and promotes assembly of the pre-initiation complex (PIC). The TFIID complex consists of tbp-1 and TBP-associated factors (TAFs), including taf-1. May regulate RNA polymerase II activity and thereby may control transcription initiation by RNA polymerase II. Required for early embryonic development. Essential for embryonic transcription of several genes. This is Transcription initiation factor TFIID subunit 1 from Caenorhabditis elegans.